The following is a 156-amino-acid chain: 6,7-dimethyl-8-ribityllumazine synthase (156 aa).

Residues F25, A59–E61, and A83–I85 contribute to the 5-amino-6-(D-ribitylamino)uracil site. A88–T89 provides a ligand contact to (2S)-2-hydroxy-3-oxobutyl phosphate. The active-site Proton donor is H91. 5-amino-6-(D-ribitylamino)uracil is bound at residue F116. Residue R130 coordinates (2S)-2-hydroxy-3-oxobutyl phosphate.

The protein belongs to the DMRL synthase family.

The catalysed reaction is (2S)-2-hydroxy-3-oxobutyl phosphate + 5-amino-6-(D-ribitylamino)uracil = 6,7-dimethyl-8-(1-D-ribityl)lumazine + phosphate + 2 H2O + H(+). The protein operates within cofactor biosynthesis; riboflavin biosynthesis; riboflavin from 2-hydroxy-3-oxobutyl phosphate and 5-amino-6-(D-ribitylamino)uracil: step 1/2. Its function is as follows. Catalyzes the formation of 6,7-dimethyl-8-ribityllumazine by condensation of 5-amino-6-(D-ribitylamino)uracil with 3,4-dihydroxy-2-butanone 4-phosphate. This is the penultimate step in the biosynthesis of riboflavin. In Nitratidesulfovibrio vulgaris (strain ATCC 29579 / DSM 644 / CCUG 34227 / NCIMB 8303 / VKM B-1760 / Hildenborough) (Desulfovibrio vulgaris), this protein is 6,7-dimethyl-8-ribityllumazine synthase.